A 250-amino-acid polypeptide reads, in one-letter code: 5-oxoprolinase subunit A (250 aa).

The protein belongs to the LamB/PxpA family. As to quaternary structure, forms a complex composed of PxpA, PxpB and PxpC.

It catalyses the reaction 5-oxo-L-proline + ATP + 2 H2O = L-glutamate + ADP + phosphate + H(+). Its function is as follows. Catalyzes the cleavage of 5-oxoproline to form L-glutamate coupled to the hydrolysis of ATP to ADP and inorganic phosphate. In Staphylococcus aureus (strain MRSA252), this protein is 5-oxoprolinase subunit A.